The chain runs to 1406 residues: DNA-directed RNA polymerase subunit beta' (1406 aa).

Zn(2+) is bound by residues Cys-70, Cys-72, Cys-85, and Cys-88. Mg(2+) contacts are provided by Asp-460, Asp-462, and Asp-464. Zn(2+)-binding residues include Cys-814, Cys-888, Cys-895, and Cys-898.

Belongs to the RNA polymerase beta' chain family. In terms of assembly, the RNAP catalytic core consists of 2 alpha, 1 beta, 1 beta' and 1 omega subunit. When a sigma factor is associated with the core the holoenzyme is formed, which can initiate transcription. Requires Mg(2+) as cofactor. It depends on Zn(2+) as a cofactor.

It carries out the reaction RNA(n) + a ribonucleoside 5'-triphosphate = RNA(n+1) + diphosphate. DNA-dependent RNA polymerase catalyzes the transcription of DNA into RNA using the four ribonucleoside triphosphates as substrates. In Photorhabdus laumondii subsp. laumondii (strain DSM 15139 / CIP 105565 / TT01) (Photorhabdus luminescens subsp. laumondii), this protein is DNA-directed RNA polymerase subunit beta'.